The primary structure comprises 678 residues: Glycine--tRNA ligase beta subunit (678 aa).

This sequence belongs to the class-II aminoacyl-tRNA synthetase family. In terms of assembly, tetramer of two alpha and two beta subunits.

It localises to the cytoplasm. The enzyme catalyses tRNA(Gly) + glycine + ATP = glycyl-tRNA(Gly) + AMP + diphosphate. This Streptococcus thermophilus (strain ATCC BAA-491 / LMD-9) protein is Glycine--tRNA ligase beta subunit.